The chain runs to 94 residues: Small ribosomal subunit protein uS19 (94 aa).

It belongs to the universal ribosomal protein uS19 family.

In terms of biological role, protein S19 forms a complex with S13 that binds strongly to the 16S ribosomal RNA. This Elusimicrobium minutum (strain Pei191) protein is Small ribosomal subunit protein uS19.